Here is a 276-residue protein sequence, read N- to C-terminus: Ribosomal RNA small subunit methyltransferase A (276 aa).

Residues asparagine 27, leucine 29, glycine 54, glutamate 75, aspartate 101, and asparagine 122 each contribute to the S-adenosyl-L-methionine site.

It belongs to the class I-like SAM-binding methyltransferase superfamily. rRNA adenine N(6)-methyltransferase family. RsmA subfamily.

The protein resides in the cytoplasm. The enzyme catalyses adenosine(1518)/adenosine(1519) in 16S rRNA + 4 S-adenosyl-L-methionine = N(6)-dimethyladenosine(1518)/N(6)-dimethyladenosine(1519) in 16S rRNA + 4 S-adenosyl-L-homocysteine + 4 H(+). Specifically dimethylates two adjacent adenosines (A1518 and A1519) in the loop of a conserved hairpin near the 3'-end of 16S rRNA in the 30S particle. May play a critical role in biogenesis of 30S subunits. The protein is Ribosomal RNA small subunit methyltransferase A of Brucella abortus (strain S19).